The primary structure comprises 550 residues: CCR4-NOT transcription complex subunit 6-like-B (550 aa).

A required for interaction with cnot1, cnot3 and cnot7 region spans residues M1 to K148. LRR repeat units follow at residues H52–L73, N75–V96, S98–F120, and R121–P143. The segment at M153–R550 is nuclease domain. E235 is a binding site for Mg(2+). Residues E235, E271, H355, and P360 each coordinate substrate. A Mg(2+)-binding site is contributed by D405. Residue D405 is the Proton donor/acceptor of the active site. Substrate-binding residues include N407, N474, and F479.

It belongs to the CCR4/nocturin family. In terms of assembly, component of the CCR4-NOT complex. It depends on Mg(2+) as a cofactor.

The protein resides in the cytoplasm. It is found in the nucleus. It carries out the reaction Exonucleolytic cleavage of poly(A) to 5'-AMP.. In terms of biological role, poly(A) nuclease with 3'-5' RNase activity. Catalytic component of the CCR4-NOT complex which is one of the major cellular mRNA deadenylases and is linked to various cellular processes including bulk mRNA degradation, miRNA-mediated repression, translational repression during translational initiation and general transcription regulation. Additional complex functions may be a consequence of its influence on mRNA expression. In Xenopus laevis (African clawed frog), this protein is CCR4-NOT transcription complex subunit 6-like-B (cnot6l-b).